The following is a 388-amino-acid chain: Paired box protein Pax-5 (388 aa).

A DNA-binding region (paired) is located at residues 15–141 (RHGGVNQLGG…SSINRIIRTK (127 aa)). Residues 18-74 (GVNQLGGVFVNGRPLPDVVRQRIVELAHQGVRPCDISRQLRVSHGCVSKILGRYYET) form a PAI subdomain region. The RED subdomain stretch occupies residues 93 to 141 (KVVDKIADYKRQNPTMFAWEIRDRLLAERVCDNDTVPSVSSINRIIRTK). Over residues 143–158 (QQPTNQQIPPSNHSIA) the composition is skewed to polar residues. Disordered regions lie at residues 143-162 (QQPTNQQIPPSNHSIASTGS) and 191-217 (AETNKRKRDEGIQESPIPNGHSLPGRD).

In terms of tissue distribution, first detected in mid-neurula embryos in the folding neural tube. With the completion of neurulation, expression becomes localized to the midbrain/hindbrain boundary (MHB) till at least stage 40. Expression is absent from regions adjacent to the MHB. In tailbuds, weakly and transiently expressed in the developing otic vesicle from stage 21 to stage 27.

It localises to the nucleus. In terms of biological role, probable transcription factor. This Xenopus laevis (African clawed frog) protein is Paired box protein Pax-5.